A 479-amino-acid chain; its full sequence is Ribulose bisphosphate carboxylase large chain 2 (479 aa).

The substrate site is built by Asn-116 and Thr-166. Residue Lys-168 is the Proton acceptor of the active site. Position 170 (Lys-170) interacts with substrate. 3 residues coordinate Mg(2+): Lys-194, Asp-196, and Glu-197. Lys-194 is modified (N6-carboxylysine). The Proton acceptor role is filled by His-287. Positions 288, 320, and 372 each coordinate substrate.

This sequence belongs to the RuBisCO large chain family. Type I subfamily. In terms of assembly, heterohexadecamer of 8 large chains and 8 small chains. Mg(2+) serves as cofactor.

It carries out the reaction 2 (2R)-3-phosphoglycerate + 2 H(+) = D-ribulose 1,5-bisphosphate + CO2 + H2O. It catalyses the reaction D-ribulose 1,5-bisphosphate + O2 = 2-phosphoglycolate + (2R)-3-phosphoglycerate + 2 H(+). In terms of biological role, ruBisCO catalyzes two reactions: the carboxylation of D-ribulose 1,5-bisphosphate, the primary event in carbon dioxide fixation, as well as the oxidative fragmentation of the pentose substrate. Both reactions occur simultaneously and in competition at the same active site. The protein is Ribulose bisphosphate carboxylase large chain 2 of Bradyrhizobium sp. (strain BTAi1 / ATCC BAA-1182).